The chain runs to 200 residues: Imidazoleglycerol-phosphate dehydratase (200 aa).

Belongs to the imidazoleglycerol-phosphate dehydratase family.

It localises to the cytoplasm. It catalyses the reaction D-erythro-1-(imidazol-4-yl)glycerol 3-phosphate = 3-(imidazol-4-yl)-2-oxopropyl phosphate + H2O. It participates in amino-acid biosynthesis; L-histidine biosynthesis; L-histidine from 5-phospho-alpha-D-ribose 1-diphosphate: step 6/9. This is Imidazoleglycerol-phosphate dehydratase from Chlorobium limicola (strain DSM 245 / NBRC 103803 / 6330).